The following is a 426-amino-acid chain: Histidine--tRNA ligase (426 aa).

Belongs to the class-II aminoacyl-tRNA synthetase family. As to quaternary structure, homodimer.

Its subcellular location is the cytoplasm. It carries out the reaction tRNA(His) + L-histidine + ATP = L-histidyl-tRNA(His) + AMP + diphosphate + H(+). The protein is Histidine--tRNA ligase of Prochlorococcus marinus (strain AS9601).